Reading from the N-terminus, the 1093-residue chain is Protein translocase subunit SecA (1093 aa).

Residues glutamine 84, 102-106 (GEGKT), and aspartate 491 each bind ATP. Disordered regions lie at residues 837–869 (QNLQEQSYKDPASDNLENNPEPKTGSQSQSEHE) and 904–1062 (SELE…TSEA). Composition is skewed to basic and acidic residues over residues 904-937 (SELESKEKEQEEVKNQETQPKENKPAETKVDATK), 944-971 (EELKAKEVATVVEEKPKKVSKAKSEKLK), and 978-1062 (PKDL…TSEA).

The protein belongs to the SecA family. In terms of assembly, monomer and homodimer. Part of the essential Sec protein translocation apparatus which comprises SecA, SecYEG and auxiliary proteins SecDF. Other proteins may also be involved.

The protein localises to the cell membrane. It is found in the cytoplasm. It catalyses the reaction ATP + H2O + cellular proteinSide 1 = ADP + phosphate + cellular proteinSide 2.. Functionally, part of the Sec protein translocase complex. Interacts with the SecYEG preprotein conducting channel. Has a central role in coupling the hydrolysis of ATP to the transfer of proteins into and across the cell membrane, serving as an ATP-driven molecular motor driving the stepwise translocation of polypeptide chains across the membrane. In Mycoplasmopsis synoviae (strain 53) (Mycoplasma synoviae), this protein is Protein translocase subunit SecA.